The sequence spans 513 residues: 5-aminolevulinate synthase, erythroid-specific, mitochondrial (513 aa).

The transit peptide at 1–18 (MAAFLRCPLLARHPPLAR) directs the protein to the mitochondrion. Residue R98 participates in succinyl-CoA binding. Pyridoxal 5'-phosphate is bound by residues C190 and F191. The succinyl-CoA site is built by S212 and K231. Pyridoxal 5'-phosphate contacts are provided by S264, H292, and T320. K323 is a catalytic residue. K323 carries the N6-(pyridoxal phosphate)lysine modification. Pyridoxal 5'-phosphate is bound by residues T352 and T353. Position 437 (T437) interacts with succinyl-CoA.

This sequence belongs to the class-II pyridoxal-phosphate-dependent aminotransferase family. In terms of assembly, homodimer. It depends on pyridoxal 5'-phosphate as a cofactor. As to expression, erythroid-specific.

It is found in the mitochondrion inner membrane. The catalysed reaction is succinyl-CoA + glycine + H(+) = 5-aminolevulinate + CO2 + CoA. Its pathway is porphyrin-containing compound metabolism; protoporphyrin-IX biosynthesis; 5-aminolevulinate from glycine: step 1/1. Functionally, catalyzes the pyridoxal 5'-phosphate (PLP)-dependent condensation of succinyl-CoA and glycine to form aminolevulinic acid (ALA), with CoA and CO2 as by-products. Contributes significantly to heme formation during erythropoiesis. This is 5-aminolevulinate synthase, erythroid-specific, mitochondrial (ALAS2) from Gallus gallus (Chicken).